Reading from the N-terminus, the 146-residue chain is UPF0178 protein BT9727_2823 (146 aa).

The protein belongs to the UPF0178 family.

This Bacillus thuringiensis subsp. konkukian (strain 97-27) protein is UPF0178 protein BT9727_2823.